A 142-amino-acid polypeptide reads, in one-letter code: Large ribosomal subunit protein uL13 (142 aa).

This sequence belongs to the universal ribosomal protein uL13 family. Part of the 50S ribosomal subunit.

In terms of biological role, this protein is one of the early assembly proteins of the 50S ribosomal subunit, although it is not seen to bind rRNA by itself. It is important during the early stages of 50S assembly. The sequence is that of Large ribosomal subunit protein uL13 from Dictyoglomus thermophilum (strain ATCC 35947 / DSM 3960 / H-6-12).